A 225-amino-acid chain; its full sequence is Large ribosomal subunit protein bL25 (225 aa).

A disordered region spans residues 188 to 225 (EEIEEAEAEAQATDADTATDDSEQTSEEQAEENKEDKE). Residues 204–217 (TATDDSEQTSEEQA) are compositionally biased toward acidic residues.

The protein belongs to the bacterial ribosomal protein bL25 family. CTC subfamily. Part of the 50S ribosomal subunit; part of the 5S rRNA/L5/L18/L25 subcomplex. Contacts the 5S rRNA. Binds to the 5S rRNA independently of L5 and L18.

Functionally, this is one of the proteins that binds to the 5S RNA in the ribosome where it forms part of the central protuberance. The sequence is that of Large ribosomal subunit protein bL25 from Exiguobacterium sibiricum (strain DSM 17290 / CCUG 55495 / CIP 109462 / JCM 13490 / 255-15).